Consider the following 467-residue polypeptide: Glutamate--tRNA ligase (467 aa).

The short motif at 10–20 (PSPTGHLHIGG) is the 'HIGH' region element. Residues Cys-99, Cys-101, Cys-126, and Glu-128 each contribute to the Zn(2+) site. Residues 236 to 240 (RLSKR) carry the 'KMSKS' region motif. Lys-239 provides a ligand contact to ATP.

The protein belongs to the class-I aminoacyl-tRNA synthetase family. Glutamate--tRNA ligase type 1 subfamily. In terms of assembly, monomer. The cofactor is Zn(2+).

It localises to the cytoplasm. It carries out the reaction tRNA(Glu) + L-glutamate + ATP = L-glutamyl-tRNA(Glu) + AMP + diphosphate. Catalyzes the attachment of glutamate to tRNA(Glu) in a two-step reaction: glutamate is first activated by ATP to form Glu-AMP and then transferred to the acceptor end of tRNA(Glu). This chain is Glutamate--tRNA ligase, found in Desulfosudis oleivorans (strain DSM 6200 / JCM 39069 / Hxd3) (Desulfococcus oleovorans).